The chain runs to 169 residues: Peptide deformylase (169 aa).

Residues Cys-91 and His-133 each contribute to the Fe cation site. Glu-134 is an active-site residue. His-137 is a binding site for Fe cation.

The protein belongs to the polypeptide deformylase family. The cofactor is Fe(2+).

It carries out the reaction N-terminal N-formyl-L-methionyl-[peptide] + H2O = N-terminal L-methionyl-[peptide] + formate. Removes the formyl group from the N-terminal Met of newly synthesized proteins. Requires at least a dipeptide for an efficient rate of reaction. N-terminal L-methionine is a prerequisite for activity but the enzyme has broad specificity at other positions. This is Peptide deformylase from Haemophilus influenzae (strain ATCC 51907 / DSM 11121 / KW20 / Rd).